A 290-amino-acid polypeptide reads, in one-letter code: Expansin-A26 (290 aa).

Positions Met-1–Ala-29 are cleaved as a signal peptide. A disordered region spans residues Asp-45 to Ala-67. In terms of domain architecture, Expansin-like EG45 spans Gly-101 to Gly-196. Positions Ser-206–Ala-286 constitute an Expansin-like CBD domain. N-linked (GlcNAc...) asparagine glycosylation occurs at Asn-250.

This sequence belongs to the expansin family. Expansin A subfamily. Expressed in flowers.

It is found in the secreted. It localises to the cell wall. Its subcellular location is the membrane. In terms of biological role, may cause loosening and extension of plant cell walls by disrupting non-covalent bonding between cellulose microfibrils and matrix glucans. No enzymatic activity has been found. May be required for rapid internodal elongation in deepwater rice during submergence. In Oryza sativa subsp. japonica (Rice), this protein is Expansin-A26 (EXPA26).